Here is a 77-residue protein sequence, read N- to C-terminus: DNA-directed RNA polymerase subunit Rpo10 (77 aa).

Zn(2+)-binding residues include Cys7, Cys10, Cys44, and Cys45.

The protein belongs to the archaeal Rpo10/eukaryotic RPB10 RNA polymerase subunit family. In terms of assembly, part of the RNA polymerase complex. It depends on Zn(2+) as a cofactor.

It is found in the cytoplasm. The catalysed reaction is RNA(n) + a ribonucleoside 5'-triphosphate = RNA(n+1) + diphosphate. Functionally, DNA-dependent RNA polymerase (RNAP) catalyzes the transcription of DNA into RNA using the four ribonucleoside triphosphates as substrates. The polypeptide is DNA-directed RNA polymerase subunit Rpo10 (Aeropyrum pernix (strain ATCC 700893 / DSM 11879 / JCM 9820 / NBRC 100138 / K1)).